A 194-amino-acid chain; its full sequence is Adenylate kinase (194 aa).

ATP is bound at residue 12 to 17 (GSGKTT). The NMP stretch occupies residues 34–63 (STGDLLREEVKKGTPLGATIASFIDNGQLV). AMP is bound by residues Thr35, Arg40, 61–63 (QLV), 88–91 (GFPR), and Gln95. Residues 130–136 (GRARGAD) are LID. Residue Arg131 participates in ATP binding. AMP contacts are provided by Arg133 and Arg145. Residue Arg173 participates in ATP binding.

It belongs to the adenylate kinase family. As to quaternary structure, monomer.

It is found in the cytoplasm. The enzyme catalyses AMP + ATP = 2 ADP. It functions in the pathway purine metabolism; AMP biosynthesis via salvage pathway; AMP from ADP: step 1/1. Its function is as follows. Catalyzes the reversible transfer of the terminal phosphate group between ATP and AMP. Plays an important role in cellular energy homeostasis and in adenine nucleotide metabolism. This chain is Adenylate kinase, found in Nitratiruptor sp. (strain SB155-2).